A 272-amino-acid polypeptide reads, in one-letter code: ATP phosphoribosyltransferase regulatory subunit (272 aa).

This sequence belongs to the class-II aminoacyl-tRNA synthetase family. HisZ subfamily. Heteromultimer composed of HisG and HisZ subunits.

Its subcellular location is the cytoplasm. The protein operates within amino-acid biosynthesis; L-histidine biosynthesis; L-histidine from 5-phospho-alpha-D-ribose 1-diphosphate: step 1/9. Functionally, required for the first step of histidine biosynthesis. May allow the feedback regulation of ATP phosphoribosyltransferase activity by histidine. This Staphylococcus aureus (strain MRSA252) protein is ATP phosphoribosyltransferase regulatory subunit.